The primary structure comprises 544 residues: CTP synthase (544 aa).

The amidoligase domain stretch occupies residues 1–266 (MATNYIFVTG…DDFVCDRFRL (266 aa)). Serine 14 serves as a coordination point for CTP. Residue serine 14 participates in UTP binding. ATP-binding positions include 15 to 20 (SLGKGI) and aspartate 72. Mg(2+) contacts are provided by aspartate 72 and glutamate 140. CTP contacts are provided by residues 147-149 (DIE), 187-192 (KTKPTQ), and lysine 223. UTP is bound by residues 187–192 (KTKPTQ) and lysine 223. An ATP-binding site is contributed by 239–241 (KDV). The region spanning 291-542 (TIGMVGKYVE…VKAAKEHQGK (252 aa)) is the Glutamine amidotransferase type-1 domain. Glycine 352 lines the L-glutamine pocket. The active-site Nucleophile; for glutamine hydrolysis is cysteine 379. Residues 380 to 383 (LGMQ), glutamate 403, and arginine 470 each bind L-glutamine. Residues histidine 515 and glutamate 517 contribute to the active site.

Belongs to the CTP synthase family. As to quaternary structure, homotetramer.

The catalysed reaction is UTP + L-glutamine + ATP + H2O = CTP + L-glutamate + ADP + phosphate + 2 H(+). It catalyses the reaction L-glutamine + H2O = L-glutamate + NH4(+). It carries out the reaction UTP + NH4(+) + ATP = CTP + ADP + phosphate + 2 H(+). The protein operates within pyrimidine metabolism; CTP biosynthesis via de novo pathway; CTP from UDP: step 2/2. Its activity is regulated as follows. Allosterically activated by GTP, when glutamine is the substrate; GTP has no effect on the reaction when ammonia is the substrate. The allosteric effector GTP functions by stabilizing the protein conformation that binds the tetrahedral intermediate(s) formed during glutamine hydrolysis. Inhibited by the product CTP, via allosteric rather than competitive inhibition. Functionally, catalyzes the ATP-dependent amination of UTP to CTP with either L-glutamine or ammonia as the source of nitrogen. Regulates intracellular CTP levels through interactions with the four ribonucleotide triphosphates. The sequence is that of CTP synthase from Glaesserella parasuis serovar 5 (strain SH0165) (Haemophilus parasuis).